A 441-amino-acid polypeptide reads, in one-letter code: Apolipoprotein N-acyltransferase (441 aa).

A run of 7 helical transmembrane segments spans residues 23–43, 45–65, 75–95, 97–117, 133–153, 156–176, and 178–198; these read IIFK…SIYL, FFEN…GLVL, YFWI…LSSI, FNLN…YGLL, GIFC…WGIF, YGFF…AYFI, and EGYI…FSGF. In terms of domain architecture, CN hydrolase spans 215–441; it reads INTNISQDQK…LSKEIFNDKK (227 aa). Glu-256 functions as the Proton acceptor in the catalytic mechanism. The active site involves Lys-310. Residue Cys-359 is the Nucleophile of the active site.

This sequence belongs to the CN hydrolase family. Apolipoprotein N-acyltransferase subfamily.

It localises to the cell inner membrane. The enzyme catalyses N-terminal S-1,2-diacyl-sn-glyceryl-L-cysteinyl-[lipoprotein] + a glycerophospholipid = N-acyl-S-1,2-diacyl-sn-glyceryl-L-cysteinyl-[lipoprotein] + a 2-acyl-sn-glycero-3-phospholipid + H(+). It functions in the pathway protein modification; lipoprotein biosynthesis (N-acyl transfer). In terms of biological role, catalyzes the phospholipid dependent N-acylation of the N-terminal cysteine of apolipoprotein, the last step in lipoprotein maturation. The sequence is that of Apolipoprotein N-acyltransferase from Campylobacter jejuni subsp. jejuni serotype O:2 (strain ATCC 700819 / NCTC 11168).